We begin with the raw amino-acid sequence, 564 residues long: Laccase-22 (564 aa).

The signal sequence occupies residues 1-25 (MAVLPESRRLSLLLMAACFLLQALS). Plastocyanin-like domains are found at residues 36–152 (NVVM…PKLG) and 162–314 (KEAV…YANT). Asn-41 and Asn-82 each carry an N-linked (GlcNAc...) asparagine glycan. Cu cation-binding residues include His-86 and His-88. A glycan (N-linked (GlcNAc...) asparagine) is linked at Asn-118. Cu cation contacts are provided by His-131 and His-133. 8 N-linked (GlcNAc...) asparagine glycosylation sites follow: Asn-191, Asn-302, Asn-331, Asn-379, Asn-389, Asn-424, Asn-437, and Asn-447. Positions 414-548 (DFPATPLHKF…KMAFVVDNGK (135 aa)) constitute a Plastocyanin-like 3 domain. Positions 465, 468, 470, 527, 528, 529, and 533 each coordinate Cu cation.

The protein belongs to the multicopper oxidase family. Cu cation serves as cofactor.

The protein resides in the secreted. It localises to the extracellular space. Its subcellular location is the apoplast. The catalysed reaction is 4 hydroquinone + O2 = 4 benzosemiquinone + 2 H2O. Its function is as follows. Lignin degradation and detoxification of lignin-derived products. The sequence is that of Laccase-22 (LAC22) from Oryza sativa subsp. japonica (Rice).